A 57-amino-acid polypeptide reads, in one-letter code: MLRWVLIFLAVAVVAAILGFGGIAGTAAGIAKIIFYIFIILFAISLVVRLLQGNKRL.

The next 2 membrane-spanning stretches (helical) occupy residues 4 to 24 (WVLI…GGIA) and 28 to 48 (AGIA…SLVV).

Belongs to the UPF0391 family.

It is found in the cell membrane. The protein is UPF0391 membrane protein IL0696 of Idiomarina loihiensis (strain ATCC BAA-735 / DSM 15497 / L2-TR).